A 181-amino-acid polypeptide reads, in one-letter code: MAKLHDLYKDTVVAELQKQFGYKSVMQVPRIEKITLNMGVGEAISDKKVLEHATNDLTAISGQKPITTVARKSVAGFKIREGYPIGTKVTLRGERMWEFLERLISISIPRIRDFRGLNPKSFDGRGNYSMGVREQIIFPEIEYDKIDKIRGLDITITTSAKDNEEGLALLSAFDFPFKKKV.

It belongs to the universal ribosomal protein uL5 family. As to quaternary structure, part of the 50S ribosomal subunit; part of the 5S rRNA/L5/L18/L25 subcomplex. Contacts the 5S rRNA and the P site tRNA. Forms a bridge to the 30S subunit in the 70S ribosome.

In terms of biological role, this is one of the proteins that bind and probably mediate the attachment of the 5S RNA into the large ribosomal subunit, where it forms part of the central protuberance. In the 70S ribosome it contacts protein S13 of the 30S subunit (bridge B1b), connecting the 2 subunits; this bridge is implicated in subunit movement. Contacts the P site tRNA; the 5S rRNA and some of its associated proteins might help stabilize positioning of ribosome-bound tRNAs. The chain is Large ribosomal subunit protein uL5 from Colwellia psychrerythraea (strain 34H / ATCC BAA-681) (Vibrio psychroerythus).